The primary structure comprises 472 residues: Protein translocase subunit SecD (472 aa).

A run of 6 helical transmembrane segments spans residues 8 to 28, 300 to 320, 325 to 347, 353 to 375, 396 to 416, and 424 to 444; these read ILFTVIVFVFALLGLILPLSG, TIINAGIIGLIIVMIYMIIFY, VIADIALIYNTFLLMGILSWTGA, GIAGIILTFGTTVDGNIIIYERI, VFSTIFDANITTILAGLVLFF, and GFAVTLIIGVLGAMFTNLVVS.

This sequence belongs to the SecD/SecF family. SecD subfamily. In terms of assembly, forms a complex with SecF. Part of the essential Sec protein translocation apparatus which comprises SecA, SecYEG and auxiliary proteins SecDF. Other proteins may also be involved.

The protein resides in the cell inner membrane. Part of the Sec protein translocase complex. Interacts with the SecYEG preprotein conducting channel. SecDF uses the proton motive force (PMF) to complete protein translocation after the ATP-dependent function of SecA. The polypeptide is Protein translocase subunit SecD (Petrotoga mobilis (strain DSM 10674 / SJ95)).